A 387-amino-acid chain; its full sequence is Arginine biosynthesis bifunctional protein ArgJ 2 (387 aa).

Residues threonine 147, lysine 169, threonine 180, glutamate 259, asparagine 382, and threonine 387 each contribute to the substrate site. Threonine 180 serves as the catalytic Nucleophile.

This sequence belongs to the ArgJ family. In terms of assembly, heterotetramer of two alpha and two beta chains.

It localises to the cytoplasm. The enzyme catalyses N(2)-acetyl-L-ornithine + L-glutamate = N-acetyl-L-glutamate + L-ornithine. It carries out the reaction L-glutamate + acetyl-CoA = N-acetyl-L-glutamate + CoA + H(+). It functions in the pathway amino-acid biosynthesis; L-arginine biosynthesis; L-ornithine and N-acetyl-L-glutamate from L-glutamate and N(2)-acetyl-L-ornithine (cyclic): step 1/1. The protein operates within amino-acid biosynthesis; L-arginine biosynthesis; N(2)-acetyl-L-ornithine from L-glutamate: step 1/4. Catalyzes two activities which are involved in the cyclic version of arginine biosynthesis: the synthesis of N-acetylglutamate from glutamate and acetyl-CoA as the acetyl donor, and of ornithine by transacetylation between N(2)-acetylornithine and glutamate. This is Arginine biosynthesis bifunctional protein ArgJ 2 from Nostoc sp. (strain PCC 7120 / SAG 25.82 / UTEX 2576).